We begin with the raw amino-acid sequence, 282 residues long: Bifunctional protein FolD (282 aa).

NADP(+) is bound by residues 164-166 and serine 189; that span reads GRS.

Belongs to the tetrahydrofolate dehydrogenase/cyclohydrolase family. In terms of assembly, homodimer.

The enzyme catalyses (6R)-5,10-methylene-5,6,7,8-tetrahydrofolate + NADP(+) = (6R)-5,10-methenyltetrahydrofolate + NADPH. The catalysed reaction is (6R)-5,10-methenyltetrahydrofolate + H2O = (6R)-10-formyltetrahydrofolate + H(+). The protein operates within one-carbon metabolism; tetrahydrofolate interconversion. Functionally, catalyzes the oxidation of 5,10-methylenetetrahydrofolate to 5,10-methenyltetrahydrofolate and then the hydrolysis of 5,10-methenyltetrahydrofolate to 10-formyltetrahydrofolate. In Anaeromyxobacter dehalogenans (strain 2CP-C), this protein is Bifunctional protein FolD.